Here is an 80-residue protein sequence, read N- to C-terminus: UPF0270 protein AHA_0994 (80 aa).

Belongs to the UPF0270 family.

This chain is UPF0270 protein AHA_0994, found in Aeromonas hydrophila subsp. hydrophila (strain ATCC 7966 / DSM 30187 / BCRC 13018 / CCUG 14551 / JCM 1027 / KCTC 2358 / NCIMB 9240 / NCTC 8049).